Here is a 216-residue protein sequence, read N- to C-terminus: Sugar transporter SWEET1 (216 aa).

The next 7 helical transmembrane spans lie at 3–23 (WMWL…SSGL), 36–56 (ENIQ…WFYY), 65–85 (LMIV…AYLL), 96–116 (QVLV…LWIL), 125–145 (LGLF…ADLA), 157–177 (SFPL…YGLV), and 181–201 (LYIT…FWLF). Residues 6 to 90 (LLSGACIVFT…GAYLLYSPER (85 aa)) enclose the MtN3/slv 1 domain. The 83-residue stretch at 124-206 (QLGLFCSVFT…RFWLFSQFPP (83 aa)) folds into the MtN3/slv 2 domain.

The protein belongs to the SWEET sugar transporter family.

Its subcellular location is the golgi apparatus membrane. It localises to the cell membrane. Mediates sugar transport across membranes. The polypeptide is Sugar transporter SWEET1 (slc50a1) (Xenopus laevis (African clawed frog)).